The primary structure comprises 180 residues: Negative modulator of initiation of replication (180 aa).

3 interaction with DNA regions span residues alanine 86–valine 87, arginine 115–tyrosine 119, and asparagine 149–lysine 155.

It belongs to the SeqA family. In terms of assembly, homodimer. Polymerizes to form helical filaments.

Its subcellular location is the cytoplasm. Negative regulator of replication initiation, which contributes to regulation of DNA replication and ensures that replication initiation occurs exactly once per chromosome per cell cycle. Binds to pairs of hemimethylated GATC sequences in the oriC region, thus preventing assembly of replication proteins and re-initiation at newly replicated origins. Repression is relieved when the region becomes fully methylated. This Salmonella typhimurium (strain LT2 / SGSC1412 / ATCC 700720) protein is Negative modulator of initiation of replication.